A 366-amino-acid polypeptide reads, in one-letter code: S-adenosylmethionine:tRNA ribosyltransferase-isomerase (366 aa).

It belongs to the QueA family. Monomer.

The protein resides in the cytoplasm. It catalyses the reaction 7-aminomethyl-7-carbaguanosine(34) in tRNA + S-adenosyl-L-methionine = epoxyqueuosine(34) in tRNA + adenine + L-methionine + 2 H(+). It functions in the pathway tRNA modification; tRNA-queuosine biosynthesis. Transfers and isomerizes the ribose moiety from AdoMet to the 7-aminomethyl group of 7-deazaguanine (preQ1-tRNA) to give epoxyqueuosine (oQ-tRNA). The sequence is that of S-adenosylmethionine:tRNA ribosyltransferase-isomerase from Caulobacter vibrioides (strain ATCC 19089 / CIP 103742 / CB 15) (Caulobacter crescentus).